Consider the following 353-residue polypeptide: UPF0283 membrane protein YcjF (353 aa).

3 consecutive transmembrane segments (helical) span residues 70-90 (MVMG…VQWT), 100-120 (VALG…GSVV), and 213-233 (ESTL…FIAW).

The protein belongs to the UPF0283 family.

It localises to the cell inner membrane. This chain is UPF0283 membrane protein YcjF, found in Escherichia coli O127:H6 (strain E2348/69 / EPEC).